We begin with the raw amino-acid sequence, 94 residues long: Sulfocarbamoylase-1 (94 aa).

In terms of assembly, homodimer. As to expression, ubiquitous (at protein level). Highest levels of expression in crystalline style followed by digestive gland and mantle.

Strongly inhibited by the serine proteinase inhibitor AEBSF. Weakly inhibited by the proteinase inhibitors BSF and aprotinin, and by EDTA. Not inhibited by the proteinase inhibitors bestatin, E-64 and leupeptin. Its function is as follows. Hydrolysis of sulfocarbamoyl esters of paralytic shellfish toxins. Does not hydrolyze the carbamoyl esters of paralytic shellfish toxins. Ester hydrolysis is significantly affected by the stereochemistry of sulfate esters at C-11 of the substrate toxin. The sequence is that of Sulfocarbamoylase-1 from Megangulus venulosus (Japanese bivalve).